Here is a 110-residue protein sequence, read N- to C-terminus: Co-chaperonin GroES (110 aa).

Belongs to the GroES chaperonin family. In terms of assembly, heptamer of 7 subunits arranged in a ring. Interacts with the chaperonin GroEL.

Its subcellular location is the cytoplasm. Functionally, together with the chaperonin GroEL, plays an essential role in assisting protein folding. The GroEL-GroES system forms a nano-cage that allows encapsulation of the non-native substrate proteins and provides a physical environment optimized to promote and accelerate protein folding. GroES binds to the apical surface of the GroEL ring, thereby capping the opening of the GroEL channel. This Mycoplasma genitalium (strain ATCC 33530 / DSM 19775 / NCTC 10195 / G37) (Mycoplasmoides genitalium) protein is Co-chaperonin GroES.